The sequence spans 95 residues: Protein TusB (95 aa).

It belongs to the DsrH/TusB family. As to quaternary structure, heterohexamer, formed by a dimer of trimers. The hexameric TusBCD complex contains 2 copies each of TusB, TusC and TusD. The TusBCD complex interacts with TusE.

It localises to the cytoplasm. Its function is as follows. Part of a sulfur-relay system required for 2-thiolation of 5-methylaminomethyl-2-thiouridine (mnm(5)s(2)U) at tRNA wobble positions. The chain is Protein TusB from Serratia proteamaculans (strain 568).